A 308-amino-acid chain; its full sequence is Lipoyl synthase 2 (308 aa).

The [4Fe-4S] cluster site is built by C49, C54, C60, C75, C79, C82, and S300. Residues 61-289 (YASGTATFLL…KRIAEGLGFK (229 aa)) form the Radical SAM core domain.

This sequence belongs to the radical SAM superfamily. Lipoyl synthase family. It depends on [4Fe-4S] cluster as a cofactor.

The protein resides in the cytoplasm. The catalysed reaction is [[Fe-S] cluster scaffold protein carrying a second [4Fe-4S](2+) cluster] + N(6)-octanoyl-L-lysyl-[protein] + 2 oxidized [2Fe-2S]-[ferredoxin] + 2 S-adenosyl-L-methionine + 4 H(+) = [[Fe-S] cluster scaffold protein] + N(6)-[(R)-dihydrolipoyl]-L-lysyl-[protein] + 4 Fe(3+) + 2 hydrogen sulfide + 2 5'-deoxyadenosine + 2 L-methionine + 2 reduced [2Fe-2S]-[ferredoxin]. The protein operates within protein modification; protein lipoylation via endogenous pathway; protein N(6)-(lipoyl)lysine from octanoyl-[acyl-carrier-protein]: step 2/2. Its function is as follows. Catalyzes the radical-mediated insertion of two sulfur atoms into the C-6 and C-8 positions of the octanoyl moiety bound to the lipoyl domains of lipoate-dependent enzymes, thereby converting the octanoylated domains into lipoylated derivatives. The chain is Lipoyl synthase 2 from Prochlorococcus marinus (strain SARG / CCMP1375 / SS120).